Here is a 356-residue protein sequence, read N- to C-terminus: Carbohydrate sulfotransferase 10 (356 aa).

Over 1-6 the chain is Cytoplasmic; the sequence is MHHQWL. A helical; Signal-anchor for type II membrane protein transmembrane segment spans residues 7-27; sequence LLAACFWVIFMFMVASKFITL. Over 28–356 the chain is Lumenal; sequence TFKDPDGYSA…GYQKPDFLLN (329 aa). Asn-99 carries N-linked (GlcNAc...) asparagine glycosylation. Residues 127 to 133 and 189 to 197 contribute to the 3'-phosphoadenylyl sulfate site; these read PKVGNTQ and RDPFERLIS. 2 N-linked (GlcNAc...) asparagine glycosylation sites follow: Asn-228 and Asn-316.

The protein belongs to the sulfotransferase 2 family. In myogenic progenitors, it is ubiquitously expressed.

It localises to the golgi apparatus membrane. The enzyme catalyses 3-O-{beta-D-GlcA-(1-&gt;[3)-alpha-D-Xyl-(1-&gt;3)-beta-D-GlcA-(1-&gt;](n)-4)-beta-D-Xyl-(1-&gt;4)-Rib-ol-P-Rib-ol-P-3-beta-D-GalNAc-(1-&gt;3)-beta-D-GlcNAc-(1-&gt;4)-O-6-P-alpha-D-Man}-L-Thr-[protein] + 3'-phosphoadenylyl sulfate = 3-O-{O-3-S-beta-D-GlcA-(1-&gt;[3)-alpha-D-Xyl-(1-&gt;3)-beta-D-GlcA-(1-&gt;](n)-4)-beta-D-Xyl-(1-&gt;4)-Rib-ol-P-Rib-ol-P-3-beta-D-GalNAc-(1-&gt;3)-beta-D-GlcNAc-(1-&gt;4)-O-6-P-alpha-D-Man}-L-Thr-[protein] + adenosine 3',5'-bisphosphate + H(+). It carries out the reaction 17beta-estradiol 3-O-(beta-D-glucuronate) + 3'-phosphoadenylyl sulfate = 17beta-estradiol 3-O-(3-sulfo-beta-D-glucuronate) + adenosine 3',5'-bisphosphate + H(+). It catalyses the reaction 17beta-estradiol 3-O-(beta-D-glucuronate) 17-sulfate + 3'-phosphoadenylyl sulfate = 17beta-estradiol 3-O-(3-sulfo-beta-D-glucuronate) 17-sulfate + adenosine 3',5'-bisphosphate + H(+). The catalysed reaction is 17beta-estradiol 17-O-(beta-D-glucuronate) + 3'-phosphoadenylyl sulfate = 17beta-estradiol 17-O-(3-sulfo-beta-D-glucuronate) + adenosine 3',5'-bisphosphate + H(+). The enzyme catalyses 16alpha,17beta-estriol 3-O-(beta-D-glucuronate) + 3'-phosphoadenylyl sulfate = 16alpha,17beta-estriol 3-O-(3-sulfo-beta-D-glucuronate) + adenosine 3',5'-bisphosphate + H(+). It carries out the reaction 16alpha,17beta-estriol 16-O-(beta-D-glucuronate) + 3'-phosphoadenylyl sulfate = 16alpha,17beta-estriol 16-O-(3-sulfo-beta-D-glucuronate) + adenosine 3',5'-bisphosphate + H(+). It catalyses the reaction 16alpha,17beta-estriol 17-O-(beta-D-glucuronate) + 3'-phosphoadenylyl sulfate = 16alpha,17beta-estriol 17-O-(3-sulfo-beta-D-glucuronate) + adenosine 3',5'-bisphosphate + H(+). The catalysed reaction is estrone 3-O-(beta-D-glucuronate) + 3'-phosphoadenylyl sulfate = estrone 3-O-(3-sulfo-beta-D-glucuronate) + adenosine 3',5'-bisphosphate + H(+). The enzyme catalyses 3alpha,20alpha-dihydroxy-5beta-pregnane 3-O-(beta-D-glucuronate) + 3'-phosphoadenylyl sulfate = 3alpha,20alpha-dihydroxy-5beta-pregnane 3-O-(3-sulfo-beta-D-glucuronate) + adenosine 3',5'-bisphosphate + H(+). It carries out the reaction testosterone 17-O-(beta-D-glucuronate) + 3'-phosphoadenylyl sulfate = testosterone 17-O-(3-sulfo-beta-D-glucuronate) + adenosine 3',5'-bisphosphate + H(+). It catalyses the reaction 3beta-androst-5-en-17-one 3-O-(beta-D-glucuronate) + 3'-phosphoadenylyl sulfate = 3beta-androst-5-en-17-one 3-O-(3-sulfo-beta-D-glucuronate) + adenosine 3',5'-bisphosphate + H(+). The catalysed reaction is 3alpha,17alpha-dihydroxy-5beta-androstane-11-one-17beta-carboxylate 3-O-(beta-D-glucuronate) + 3'-phosphoadenylyl sulfate = 3alpha,17alpha-dihydroxy-5beta-androstane-11-one-17beta-carboxylate 3-O-(3-sulfo-beta-D-glucuronate) + adenosine 3',5'-bisphosphate + H(+). The enzyme catalyses 3alpha-hydroxyetiocholan-17-one 3-O-(beta-D-glucuronate) + 3'-phosphoadenylyl sulfate = 3alpha-hydroxyetiocholan-17-one 3-O-(3-sulfo-beta-D-glucuronate) + adenosine 3',5'-bisphosphate + H(+). The protein operates within steroid metabolism. It functions in the pathway protein modification; carbohydrate sulfation. Functionally, catalyzes the transfer of sulfate from 3'-phosphoadenylyl sulfate (PAPS) to position 3 of terminal glucuronic acid of both protein- and lipid-linked oligosaccharides. Participates in biosynthesis of HNK-1 carbohydrate structure 3-O-sulfo-beta-D-GlcA-(1-&gt;3)-beta-D-Gal-(1-&gt;4)-D-GlcNAc-R, a sulfated glucuronyl-lactosaminyl residue carried by many neural recognition molecules, which is involved in cell interactions during ontogenetic development and in synaptic plasticity in the adult. May be indirectly involved in synapse plasticity of the hippocampus, via its role in HNK-1 biosynthesis. Sulfates terminal glucuronyl residue of the laminin globular (LG)-domain binding epitope on DAG1/alpha-dystroglycan and prevents further polymerization by LARGE1 glycosyltransferase. Likely defines the chain length of LG epitope, conferring binding specificity to extracellular matrix components. Plays a role in down-regulating the steroid hormones. Sulfates glucuronidated estrogens and androgens with an impact in hormone cycle and fertility. Has a preference for glucuronyl moiety at the 3-hydroxyl group of a sterol ring rather than the 17-hydroxyl group, showing high catalytic efficiency for 17beta-estradiol 3-O-(beta-D-glucuronate) and dehydroepiandrosterone 3-O-(beta-D-glucuronate) hormones. In Rattus norvegicus (Rat), this protein is Carbohydrate sulfotransferase 10 (Chst10).